Reading from the N-terminus, the 427-residue chain is Nucleolar and spindle-associated protein 1 (427 aa).

Residues 41 to 190 (AHLNPETRKE…LGNNKRTSAT (150 aa)) form a disordered region. The segment covering 43–55 (LNPETRKENKNQD) has biased composition (basic and acidic residues). The segment covering 83-96 (TKTRRRRRKKHKTI) has biased composition (basic residues). Positions 119–128 (NFQNQENQEN) are enriched in low complexity. S139 is subject to Phosphoserine. Residues 159 to 179 (NDIKDSKKPLEKRSLCTDEFS) are compositionally biased toward basic and acidic residues. The segment covering 181 to 190 (LGNNKRTSAT) has biased composition (polar residues). Position 191 is a phosphothreonine (T191). The tract at residues 235–312 (IVTPVPPRGR…QAVFRTPKSK (78 aa)) is disordered. The interval 243-367 (GRLSVPCTPA…HKGKLKPWGQ (125 aa)) is interaction with microtubules. Position 246 is a phosphoserine (S246). T250 bears the Phosphothreonine mark. Residues 252-264 (ARQQCPQGHSATK) show a composition bias toward polar residues. S261 carries the post-translational modification Phosphoserine. Phosphothreonine is present on residues T323 and T334. S337 and S348 each carry phosphoserine. Residues 354–427 (NYKPHKGKLK…RRNLGVTKAQ (74 aa)) are disordered. The short motif at 369–375 (KENNSLN) is the KEN box element. Positions 393–425 (LQTREERWKRQEQERKEKKEKLLEARRNLGVTK) form a coiled coil. Residues 394-419 (QTREERWKRQEQERKEKKEKLLEARR) show a composition bias toward basic and acidic residues.

This sequence belongs to the NUSAP family. In terms of assembly, interacts with DNA and microtubules. Microtubule bundling is inhibited by IPO7, KPNA2 and KPNB1 while association with DNA is also inhibited by IPO7 and KPNA2. Ubiquitinated. Ubiquitination by FZR1 may lead to proteasome-dependent degradation of this protein.

It localises to the cytoplasm. It is found in the nucleus. The protein localises to the nucleolus. Its subcellular location is the cytoskeleton. The protein resides in the spindle. It localises to the chromosome. Functionally, microtubule-associated protein with the capacity to bundle and stabilize microtubules. May associate with chromosomes and promote the organization of mitotic spindle microtubules around them. The protein is Nucleolar and spindle-associated protein 1 (Nusap1) of Mus musculus (Mouse).